Consider the following 469-residue polypeptide: Argininosuccinate lyase (469 aa).

It belongs to the lyase 1 family. Argininosuccinate lyase subfamily.

Its subcellular location is the cytoplasm. It carries out the reaction 2-(N(omega)-L-arginino)succinate = fumarate + L-arginine. It functions in the pathway amino-acid biosynthesis; L-arginine biosynthesis; L-arginine from L-ornithine and carbamoyl phosphate: step 3/3. In Burkholderia cenocepacia (strain ATCC BAA-245 / DSM 16553 / LMG 16656 / NCTC 13227 / J2315 / CF5610) (Burkholderia cepacia (strain J2315)), this protein is Argininosuccinate lyase.